Here is a 59-residue protein sequence, read N- to C-terminus: Small ribosomal subunit protein bS21 (59 aa).

The segment at 40 to 59 (KPSIKKRAKSKAALKYKKQR) is disordered.

It belongs to the bacterial ribosomal protein bS21 family.

The sequence is that of Small ribosomal subunit protein bS21 from Protochlamydia amoebophila (strain UWE25).